Here is a 598-residue protein sequence, read N- to C-terminus: MKLKTPDEVPQKPGVYIMHNKEDEVIYVGKAKKLKSRLQSYFRDEDKLDRPKTQFLMRHFSYFEYILTNTEKEALILEANLIKKYRPHYNISLKDGKQYPYIKITNEDFPRIYITRNIVNDKASYYGPYTDSTHARAFIDFLNKNFQIRTCKHMDGPCLNYQIKQCSAPCVNYISQEEYNRNIRRVKLLLQGKYKTTIKKLKKDMNRYAKNMEFEKAAMLRDQIDTIKITLEKQNIQPNQDVNQDIIGFDHNNEEAAVVILSVRSGKTNKKDDLVLKGIKGFSDKQIRTEFIKQYYSTAPLPDEIILEDDIEDKDVIVEWLEEKANHKIKITVATDGHYITLIKIAKKNAHISLTENTKEEENPLLTLEKYLNLPRLPYHIEAFDISNISGIYAVASMVVFENGKPAKKMYRKFKMNTPGPNDFAMMKEVITRRYSHISPNNTNNTSDSLSIHPDLVLIDGGKGQLGMAVDVFKKLNITDVPLAGLAKKFEEVYLPGQTNPIILPRQSSALHLLQYVRDESHRFAITFHRKLRSKAFTKSILDDIPGVGKKRKQALLTHFESLDNIYNASFDEICQVKGINQKLAKTIYETLKEDKKE.

A GIY-YIG domain is found at 11-91 (QKPGVYIMHN…IKKYRPHYNI (81 aa)). In terms of domain architecture, UVR spans 195-230 (KTTIKKLKKDMNRYAKNMEFEKAAMLRDQIDTIKIT).

The protein belongs to the UvrC family. In terms of assembly, interacts with UvrB in an incision complex.

It is found in the cytoplasm. Functionally, the UvrABC repair system catalyzes the recognition and processing of DNA lesions. UvrC both incises the 5' and 3' sides of the lesion. The N-terminal half is responsible for the 3' incision and the C-terminal half is responsible for the 5' incision. The polypeptide is UvrABC system protein C (Methanosphaera stadtmanae (strain ATCC 43021 / DSM 3091 / JCM 11832 / MCB-3)).